Reading from the N-terminus, the 267-residue chain is B3 domain-containing protein At3g11580 (267 aa).

A DNA-binding region (TF-B3) is located at residues 29 to 143; that stretch reads FEKSLTPSDV…RLFIGWRRRG (115 aa).

The protein resides in the nucleus. The sequence is that of B3 domain-containing protein At3g11580 (ARF32) from Arabidopsis thaliana (Mouse-ear cress).